The chain runs to 307 residues: Aspartate carbamoyltransferase catalytic subunit (307 aa).

Carbamoyl phosphate contacts are provided by Arg54 and Thr55. Lys83 contacts L-aspartate. Residues Arg104, His132, and Gln135 each coordinate carbamoyl phosphate. Residues Arg165 and Arg228 each contribute to the L-aspartate site. Residues Leu267 and Pro268 each coordinate carbamoyl phosphate.

This sequence belongs to the aspartate/ornithine carbamoyltransferase superfamily. ATCase family. Heterododecamer (2C3:3R2) of six catalytic PyrB chains organized as two trimers (C3), and six regulatory PyrI chains organized as three dimers (R2).

It carries out the reaction carbamoyl phosphate + L-aspartate = N-carbamoyl-L-aspartate + phosphate + H(+). The protein operates within pyrimidine metabolism; UMP biosynthesis via de novo pathway; (S)-dihydroorotate from bicarbonate: step 2/3. Catalyzes the condensation of carbamoyl phosphate and aspartate to form carbamoyl aspartate and inorganic phosphate, the committed step in the de novo pyrimidine nucleotide biosynthesis pathway. The sequence is that of Aspartate carbamoyltransferase catalytic subunit from Clostridium botulinum (strain Okra / Type B1).